The following is a 671-amino-acid chain: DNA ligase (671 aa).

NAD(+)-binding positions include 32–36, 81–82, and Glu-113; these read DAEYD and SL. Lys-115 acts as the N6-AMP-lysine intermediate in catalysis. NAD(+)-binding residues include Arg-136, Glu-173, Lys-290, and Lys-314. 4 residues coordinate Zn(2+): Cys-408, Cys-411, Cys-426, and Cys-432. In terms of domain architecture, BRCT spans 593-671; that stretch reads EIDSPFAGKT…EAEMIRLLGA (79 aa).

Belongs to the NAD-dependent DNA ligase family. LigA subfamily. Mg(2+) is required as a cofactor. It depends on Mn(2+) as a cofactor.

It catalyses the reaction NAD(+) + (deoxyribonucleotide)n-3'-hydroxyl + 5'-phospho-(deoxyribonucleotide)m = (deoxyribonucleotide)n+m + AMP + beta-nicotinamide D-nucleotide.. DNA ligase that catalyzes the formation of phosphodiester linkages between 5'-phosphoryl and 3'-hydroxyl groups in double-stranded DNA using NAD as a coenzyme and as the energy source for the reaction. It is essential for DNA replication and repair of damaged DNA. This Salmonella paratyphi A (strain ATCC 9150 / SARB42) protein is DNA ligase.